The primary structure comprises 1337 residues: ATP-dependent helicase/nuclease subunit A (1337 aa).

One can recognise a UvrD-like helicase ATP-binding domain in the interval 3–484; sequence FTPSKEQEPA…LDLSDNYRSR (482 aa). Position 24–31 (24–31) interacts with ATP; that stretch reads ASAGSGKT. Positions 522-867 constitute a UvrD-like helicase C-terminal domain; the sequence is ADRDQASPAT…NVMTIHKSKG (346 aa).

The protein belongs to the helicase family. AddA subfamily. In terms of assembly, heterodimer of AddA and AddB/RexB. Mg(2+) serves as cofactor.

The catalysed reaction is Couples ATP hydrolysis with the unwinding of duplex DNA by translocating in the 3'-5' direction.. It catalyses the reaction ATP + H2O = ADP + phosphate + H(+). In terms of biological role, the heterodimer acts as both an ATP-dependent DNA helicase and an ATP-dependent, dual-direction single-stranded exonuclease. Recognizes the chi site generating a DNA molecule suitable for the initiation of homologous recombination. The AddA nuclease domain is required for chi fragment generation; this subunit has the helicase and 3' -&gt; 5' nuclease activities. In Limosilactobacillus fermentum (strain NBRC 3956 / LMG 18251) (Lactobacillus fermentum), this protein is ATP-dependent helicase/nuclease subunit A.